The primary structure comprises 67 residues: Toxin Bl-1 (67 aa).

Positions 2 to 66 constitute an LCN-type CS-alpha/beta domain; it reads RDGYISQPEN…GIIVDGIKCH (65 aa). Intrachain disulfides connect C12–C65, C16–C37, C23–C47, and C27–C49. A Threonine amide modification is found at T67.

It belongs to the long (4 C-C) scorpion toxin superfamily. Sodium channel inhibitor family. Alpha subfamily. As to expression, expressed by the venom gland.

The protein localises to the secreted. In terms of biological role, alpha toxins bind voltage-independently at site-3 of sodium channels (Nav) and inhibit the inactivation of the activated channels, thereby blocking neuronal transmission. Is highly toxic to insects (tested on the crickets A.domesticus). This peptide may also be toxic to mammals, since it is similar to alpha-like toxins that are active on both insect and mammalian sodium channels. In Buthacus leptochelys (Egyptian fat-tailed scorpion), this protein is Toxin Bl-1.